The sequence spans 106 residues: uncharacterized protein (106 aa).

The tract at residues 28 to 68 is disordered; sequence SSANEPKKLPNKKLVSTKSHTQVNREKSKNKDTYEDYSDSN. Residues 50 to 61 are compositionally biased toward basic and acidic residues; that stretch reads VNREKSKNKDTY.

This is an uncharacterized protein from Acanthamoeba polyphaga (Amoeba).